Reading from the N-terminus, the 175-residue chain is Ribosome maturation factor RimM (175 aa).

Residues 98–172 (DGEFHVRDLQ…WLLITPPKGL (75 aa)) form the PRC barrel domain.

It belongs to the RimM family. Binds ribosomal protein uS19.

Its subcellular location is the cytoplasm. In terms of biological role, an accessory protein needed during the final step in the assembly of 30S ribosomal subunit, possibly for assembly of the head region. Essential for efficient processing of 16S rRNA. May be needed both before and after RbfA during the maturation of 16S rRNA. It has affinity for free ribosomal 30S subunits but not for 70S ribosomes. This is Ribosome maturation factor RimM from Synechococcus sp. (strain RCC307).